The sequence spans 371 residues: DNA replication and repair protein RecF (371 aa).

Position 30-37 (30-37 (GENAQGKT)) interacts with ATP.

The protein belongs to the RecF family.

Its subcellular location is the cytoplasm. Its function is as follows. The RecF protein is involved in DNA metabolism; it is required for DNA replication and normal SOS inducibility. RecF binds preferentially to single-stranded, linear DNA. It also seems to bind ATP. In Staphylococcus epidermidis (strain ATCC 35984 / DSM 28319 / BCRC 17069 / CCUG 31568 / BM 3577 / RP62A), this protein is DNA replication and repair protein RecF.